Here is a 471-residue protein sequence, read N- to C-terminus: Cell division protein FtsP (471 aa).

Residues 1 to 27 (MSLSRRSFLQASGVALAAGALPLKAEA) constitute a signal peptide (tat-type signal). The Plastocyanin-like domain occupies 229–288 (VRLRLLNASNARRYELSMTDNRAFHVVASDLGFLPAPMTVKRLSLGPGERREVLVDMSQG).

Belongs to the FtsP family. Post-translationally, predicted to be exported by the Tat system. The position of the signal peptide cleavage has not been experimentally proven.

Its subcellular location is the periplasm. In terms of biological role, cell division protein that is required for growth during stress conditions. May be involved in protecting or stabilizing the divisomal assembly under conditions of stress. This chain is Cell division protein FtsP, found in Rahnella sp. (strain Y9602).